The following is a 389-amino-acid chain: Urotensin-2 receptor (389 aa).

Polar residues-rich tracts occupy residues 1–10 (MALTPESPSS) and 28–39 (PNATLNSSWASP). Residues 1–39 (MALTPESPSSFPGLAAIGSSVPEPPGSPNATLNSSWASP) form a disordered region. Over 1-54 (MALTPESPSSFPGLAAIGSSVPEPPGSPNATLNSSWASPTEPSSLEDLVATGAI) the chain is Extracellular. 2 N-linked (GlcNAc...) asparagine glycosylation sites follow: Asn-29 and Asn-33. The chain crosses the membrane as a helical span at residues 55–77 (GTLLSAMGVVGVVGNAYTLVVTC). Over 78–87 (RSLRAVASMY) the chain is Cytoplasmic. A helical membrane pass occupies residues 88-113 (IYVVNLALADLLYLLSIPFIVATYIT). Over 114–124 (KEWHFGDVGCR) the chain is Extracellular. Residues Cys-123 and Cys-199 are joined by a disulfide bond. A helical transmembrane segment spans residues 125-146 (VLFSLDFLTMHASIFTLTVMSS). Residues 147 to 167 (ERYAAVLRPLDTVQRPKGYRK) lie on the Cytoplasmic side of the membrane. Residues 168 to 186 (LLALGTWLLALLLTLPVML) form a helical membrane-spanning segment. The Extracellular segment spans residues 187-209 (AMRLVRRGPKSLCLPAWGPRAHR). Residues 210 to 232 (AYLTLLFATSIAGPGLLIGLLYA) traverse the membrane as a helical segment. Over 233–258 (RLARAYRRSQRASFKRARRPGARALR) the chain is Cytoplasmic. Residues 259–284 (LVLGIVLLFWACFLPFWLWQLLAQYR) traverse the membrane as a helical segment. At 285–297 (EAPLAPRTARIVN) the chain is on the extracellular side. Residues 298–318 (YLTTCLTYGNSCANPFLYTLL) form a helical membrane-spanning segment. Over 319 to 389 (TRNYRDHLRG…PALESPGDPA (71 aa)) the chain is Cytoplasmic. A disordered region spans residues 328–366 (GRVRSPGSGGVRGPVPSLQPRARFQRGSGRSLSSCSPQP). Polar residues predominate over residues 355-366 (SGRSLSSCSPQP).

It belongs to the G-protein coupled receptor 1 family.

The protein resides in the cell membrane. Its function is as follows. High affinity receptor for urotensin-2 and urotensin-2B. The activity of this receptor is mediated by a G-protein that activate a phosphatidylinositol-calcium second messenger system. This is Urotensin-2 receptor (UTS2R) from Macaca mulatta (Rhesus macaque).